Reading from the N-terminus, the 286-residue chain is Nucleotide-binding protein Tgr7_0722 (286 aa).

8 to 15 (GLSGSGKS) provides a ligand contact to ATP. A GTP-binding site is contributed by 60 to 63 (DVRS).

It belongs to the RapZ-like family.

Functionally, displays ATPase and GTPase activities. The sequence is that of Nucleotide-binding protein Tgr7_0722 from Thioalkalivibrio sulfidiphilus (strain HL-EbGR7).